Reading from the N-terminus, the 461-residue chain is UDP-glucose 6-dehydrogenase TuaD (461 aa).

NAD(+) is bound by residues 3–20, valine 12, aspartate 31, lysine 36, threonine 122, and glutamate 156; that span reads KIAV…GTCF. Substrate is bound by residues 152 to 156, lysine 205, asparagine 209, 250 to 254, and glycine 258; these read EFLRE and FLKAG. The active-site Nucleophile is the cysteine 261. Residue lysine 264 coordinates NAD(+). Residue lysine 321 participates in substrate binding. Residue arginine 328 coordinates NAD(+).

It belongs to the UDP-glucose/GDP-mannose dehydrogenase family. Phosphorylated by YwqD and dephosphorylated by YwqE in vitro.

It is found in the cytoplasm. It carries out the reaction UDP-alpha-D-glucose + 2 NAD(+) + H2O = UDP-alpha-D-glucuronate + 2 NADH + 3 H(+). The protein operates within nucleotide-sugar biosynthesis; UDP-alpha-D-glucuronate biosynthesis; UDP-alpha-D-glucuronate from UDP-alpha-D-glucose: step 1/1. With respect to regulation, activated by phosphorylation; inhibited by dephosphorylation. In terms of biological role, catalyzes the conversion of UDP-glucose into UDP-glucuronate, one of the precursors of teichuronic acid. The polypeptide is UDP-glucose 6-dehydrogenase TuaD (tuaD) (Bacillus subtilis (strain 168)).